Consider the following 129-residue polypeptide: Small ribosomal subunit protein uS9 (129 aa).

The segment at 107 to 129 is disordered; the sequence is SRTVERKKYGRRKARRSPQFSKR. A compositionally biased stretch (basic residues) spans 114 to 129; it reads KYGRRKARRSPQFSKR.

This sequence belongs to the universal ribosomal protein uS9 family.

The protein is Small ribosomal subunit protein uS9 of Campylobacter jejuni subsp. jejuni serotype O:23/36 (strain 81-176).